Here is a 213-residue protein sequence, read N- to C-terminus: Octanoyltransferase (213 aa).

Positions 32–207 (ENSHDEIWLV…NILALLNNPP (176 aa)) constitute a BPL/LPL catalytic domain. Substrate-binding positions include 71–78 (RGGQVTYH), 138–140 (SLG), and 151–153 (GLA). Cysteine 169 serves as the catalytic Acyl-thioester intermediate.

This sequence belongs to the LipB family.

It localises to the cytoplasm. The catalysed reaction is octanoyl-[ACP] + L-lysyl-[protein] = N(6)-octanoyl-L-lysyl-[protein] + holo-[ACP] + H(+). It participates in protein modification; protein lipoylation via endogenous pathway; protein N(6)-(lipoyl)lysine from octanoyl-[acyl-carrier-protein]: step 1/2. Functionally, catalyzes the transfer of endogenously produced octanoic acid from octanoyl-acyl-carrier-protein onto the lipoyl domains of lipoate-dependent enzymes. Lipoyl-ACP can also act as a substrate although octanoyl-ACP is likely to be the physiological substrate. This Salmonella paratyphi A (strain ATCC 9150 / SARB42) protein is Octanoyltransferase.